A 464-amino-acid polypeptide reads, in one-letter code: Potassium/proton antiporter CemA (464 aa).

5 helical membrane-spanning segments follow: residues Phe-36–Leu-56, Ala-241–Ile-261, Leu-341–Phe-361, Ile-389–Val-409, and Thr-425–Phe-445.

Belongs to the CemA family.

The protein resides in the plastid. Its subcellular location is the chloroplast inner membrane. It catalyses the reaction K(+)(in) + H(+)(out) = K(+)(out) + H(+)(in). In terms of biological role, contributes to K(+)/H(+) antiport activity by supporting proton efflux to control proton extrusion and homeostasis in chloroplasts in a light-dependent manner to modulate photosynthesis. Prevents excessive induction of non-photochemical quenching (NPQ) under continuous-light conditions. Indirectly promotes efficient inorganic carbon uptake into chloroplasts. The polypeptide is Potassium/proton antiporter CemA (Adiantum capillus-veneris (Maidenhair fern)).